The sequence spans 98 residues: Small ribosomal subunit protein uS19c (98 aa).

It belongs to the universal ribosomal protein uS19 family.

It is found in the plastid. Its subcellular location is the chloroplast. Protein S19 forms a complex with S13 that binds strongly to the 16S ribosomal RNA. The chain is Small ribosomal subunit protein uS19c from Jasminum nudiflorum (Winter jasmine).